Consider the following 1037-residue polypeptide: Sentrin-specific protease 7 (1037 aa).

Residues 1–10 show a composition bias toward basic residues; that stretch reads MDRARPGRRR. 2 disordered regions span residues 1–27 and 185–399; these read MDRA…SSPA and SDTA…ENSS. S12, S13, and S25 each carry phosphoserine. Positions 192–208 are enriched in low complexity; sequence SEQLSSSSDGSLESCQS. Polar residues predominate over residues 272 to 282; the sequence is GTSNKNTSYSY. Basic residues predominate over residues 290 to 300; sequence VSRKRKKRGRS. 2 stretches are compositionally biased toward basic and acidic residues: residues 301 to 321 and 328 to 341; these read NFHD…HTKE and VSRK…DSHQ. Residues 379–399 show a composition bias toward low complexity; sequence ASSPNKSLESSASSEVSENSS. A phosphoserine mark is found at S434 and S435. The interval 747-1037 is protease; the sequence is LGVTNEDLEC…HLQQQKGGSC (291 aa). H847 is an active-site residue. Residues 873 to 909 are disordered; that stretch reads QFQGQQSQHDHKMTDNDPHTTSTVSTSAEDSQSTEVN. Basic and acidic residues predominate over residues 880 to 890; it reads QHDHKMTDNDP. Residues 891 to 909 show a composition bias toward polar residues; sequence HTTSTVSTSAEDSQSTEVN. D926 is an active-site residue. Catalysis depends on C979, which acts as the Nucleophile.

This sequence belongs to the peptidase C48 family.

The protein localises to the cytoplasm. In terms of biological role, protease that acts as a positive regulator of the cGAS-STING pathway by catalyzing desumoylation of CGAS. Desumoylation of CGAS promotes DNA-binding activity of CGAS, subsequent oligomerization and activation. Deconjugates SUMO2 and SUMO3 from targeted proteins, but not SUMO1. Catalyzes the deconjugation of poly-SUMO2 and poly-SUMO3 chains. Has very low efficiency in processing full-length SUMO proteins to their mature forms. This is Sentrin-specific protease 7 from Mus musculus (Mouse).